Here is a 208-residue protein sequence, read N- to C-terminus: MNRKNIAKGKLVRRFGVNIFEQPKYDKLLKKKPNAPGMHGRSRRAKITEYGKQLIEKQKVKFTYGVSERQLTNIFKESRRQHGVTGDNLLALLERRIDNVVYRAGFAISRAHARQIVSHGIIMLNGRRVTIPSITLRANDMIQVKEKDRLKKLVRSNIEKTSTLRKLPTWIEVNADDLNVKITRPPSRDEIPTLANEQMIVEYYSKRA.

The S4 RNA-binding domain maps to 95–157; sequence RRIDNVVYRA…DRLKKLVRSN (63 aa).

Belongs to the universal ribosomal protein uS4 family. In terms of assembly, part of the 30S ribosomal subunit. Contacts protein S5. The interaction surface between S4 and S5 is involved in control of translational fidelity.

One of the primary rRNA binding proteins, it binds directly to 16S rRNA where it nucleates assembly of the body of the 30S subunit. In terms of biological role, with S5 and S12 plays an important role in translational accuracy. This is Small ribosomal subunit protein uS4 from Borrelia turicatae (strain 91E135).